A 629-amino-acid polypeptide reads, in one-letter code: Pentatricopeptide repeat-containing protein At1g63150 (629 aa).

16 PPR repeats span residues 46–81 (ASGDYREILRNRLSDIIKVDDAVDLFGDMVKSRPFP), 82–116 (SIVEFNKLLSAVAKMNKFELVISLGEQMQTLGISH), 117–151 (DLYTYSIFINCFCRRSQLSLALAVLAKMMKLGYEP), 152–186 (DIVTLSSLLNGYCHSKRISDAVALVDQMVEMGYKP), 187–221 (DTFTFTTLIHGLFLHNKASEAVALVDQMVQRGCQP), 222–256 (DLVTYGTVVNGLCKRGDIDLALNLLNKMEAARIKA), 257–291 (NVVIFNTIIDSLCKYRHVEVAVDLFTEMETKGIRP), 292–326 (NVVTYNSLINCLCNYGRWSDASRLLSNMLEKKINP), 327–361 (NVVTFNALIDAFFKEGKLVEAEKLHEEMIQRSIDP), 362–396 (DTITYNLLINGFCMHNRLDEAKQMFKFMVSKDCLP), 397–431 (NIQTYNTLINGFCKCKRVEDGVELFREMSQRGLVG), 432–466 (NTVTYTTIIQGFFQAGDCDSAQMVFKQMVSNRVPT), 467–501 (DIMTYSILLHGLCSYGKLDTALVIFKYLQKSEMEL), 502–532 (NIFIYNTMIEGMCKAGKVGEAWDLFCSLSIK), 534–568 (DVVTYNTMISGLCSKRLLQEADDLFRKMKEDGTLP), and 569–603 (NSGTYNTLIRANLRDCDRAASAELIKEMRSSGFVG).

This sequence belongs to the PPR family. P subfamily.

The sequence is that of Pentatricopeptide repeat-containing protein At1g63150 from Arabidopsis thaliana (Mouse-ear cress).